A 355-amino-acid polypeptide reads, in one-letter code: Protein RecA (355 aa).

67–74 (GPESSGKT) lines the ATP pocket.

This sequence belongs to the RecA family.

Its subcellular location is the cytoplasm. Functionally, can catalyze the hydrolysis of ATP in the presence of single-stranded DNA, the ATP-dependent uptake of single-stranded DNA by duplex DNA, and the ATP-dependent hybridization of homologous single-stranded DNAs. It interacts with LexA causing its activation and leading to its autocatalytic cleavage. The protein is Protein RecA of Proteus mirabilis (strain HI4320).